Reading from the N-terminus, the 388-residue chain is Succinate--CoA ligase [ADP-forming] subunit beta (388 aa).

Positions 9–244 (KQLFARYGLP…QSQEDPREAQ (236 aa)) constitute an ATP-grasp domain. ATP-binding positions include Lys46, 53–55 (GRG), Glu99, Thr102, and Glu107. Mg(2+) is bound by residues Asn199 and Asp213. Residues Asn264 and 321-323 (GIV) each bind substrate.

It belongs to the succinate/malate CoA ligase beta subunit family. Heterotetramer of two alpha and two beta subunits. The cofactor is Mg(2+).

The enzyme catalyses succinate + ATP + CoA = succinyl-CoA + ADP + phosphate. It catalyses the reaction GTP + succinate + CoA = succinyl-CoA + GDP + phosphate. It participates in carbohydrate metabolism; tricarboxylic acid cycle; succinate from succinyl-CoA (ligase route): step 1/1. Succinyl-CoA synthetase functions in the citric acid cycle (TCA), coupling the hydrolysis of succinyl-CoA to the synthesis of either ATP or GTP and thus represents the only step of substrate-level phosphorylation in the TCA. The beta subunit provides nucleotide specificity of the enzyme and binds the substrate succinate, while the binding sites for coenzyme A and phosphate are found in the alpha subunit. In Shigella boydii serotype 18 (strain CDC 3083-94 / BS512), this protein is Succinate--CoA ligase [ADP-forming] subunit beta.